The following is a 124-amino-acid chain: NADH-quinone oxidoreductase subunit K (124 aa).

The next 3 membrane-spanning stretches (helical) occupy residues 28 to 48 (MEHGLILAAIIFAIGLCGVMV), 52 to 72 (FLFMLMSLEIMMSAAGLAFIV), and 84 to 104 (IMFIFILTLAAAEASLGLAIL).

Belongs to the complex I subunit 4L family. NDH-1 is composed of 14 different subunits. Subunits NuoA, H, J, K, L, M, N constitute the membrane sector of the complex.

It localises to the cell inner membrane. It catalyses the reaction a quinone + NADH + 5 H(+)(in) = a quinol + NAD(+) + 4 H(+)(out). In terms of biological role, NDH-1 shuttles electrons from NADH, via FMN and iron-sulfur (Fe-S) centers, to quinones in the respiratory chain. The immediate electron acceptor for the enzyme in this species is believed to be ubiquinone. Couples the redox reaction to proton translocation (for every two electrons transferred, four hydrogen ions are translocated across the cytoplasmic membrane), and thus conserves the redox energy in a proton gradient. In Psychrobacter sp. (strain PRwf-1), this protein is NADH-quinone oxidoreductase subunit K.